Reading from the N-terminus, the 303-residue chain is Coenzyme PQQ synthesis protein B (303 aa).

The protein belongs to the PqqB family.

The protein operates within cofactor biosynthesis; pyrroloquinoline quinone biosynthesis. In terms of biological role, may be involved in the transport of PQQ or its precursor to the periplasm. The sequence is that of Coenzyme PQQ synthesis protein B from Pseudomonas syringae pv. tomato (strain ATCC BAA-871 / DC3000).